Reading from the N-terminus, the 314-residue chain is tRNA pseudouridine synthase B (314 aa).

Asp-47 functions as the Nucleophile in the catalytic mechanism.

Belongs to the pseudouridine synthase TruB family. Type 1 subfamily.

It carries out the reaction uridine(55) in tRNA = pseudouridine(55) in tRNA. Its function is as follows. Responsible for synthesis of pseudouridine from uracil-55 in the psi GC loop of transfer RNAs. The sequence is that of tRNA pseudouridine synthase B from Vibrio vulnificus (strain CMCP6).